Consider the following 122-residue polypeptide: Large ribosomal subunit protein bL12 (122 aa).

This sequence belongs to the bacterial ribosomal protein bL12 family. As to quaternary structure, homodimer. Part of the ribosomal stalk of the 50S ribosomal subunit. Forms a multimeric L10(L12)X complex, where L10 forms an elongated spine to which 2 to 4 L12 dimers bind in a sequential fashion. Binds GTP-bound translation factors.

In terms of biological role, forms part of the ribosomal stalk which helps the ribosome interact with GTP-bound translation factors. Is thus essential for accurate translation. This is Large ribosomal subunit protein bL12 from Deinococcus radiodurans (strain ATCC 13939 / DSM 20539 / JCM 16871 / CCUG 27074 / LMG 4051 / NBRC 15346 / NCIMB 9279 / VKM B-1422 / R1).